We begin with the raw amino-acid sequence, 23 residues long: PAWLVDCPCVGDDISRLLTRGEK.

Pro1 is a propeptide. The cyclopeptide (Ala-Pro) cross-link spans 2-8 (AWLVDCP). A cross-link (2'-cysteinyl-6'-hydroxytryptophan sulfoxide (Trp-Cys)) is located at residues 3 to 7 (WLVDC). The propeptide occupies 9 to 23 (CVGDDISRLLTRGEK).

This sequence belongs to the MSDIN fungal toxin family. Processed by the macrocyclase-peptidase enzyme POPB to yield a toxic cyclic heptapeptide. POPB first removes 10 residues from the N-terminus. Conformational trapping of the remaining peptide forces the enzyme to release this intermediate rather than proceed to macrocyclization. The enzyme rebinds the remaining peptide in a different conformation and catalyzes macrocyclization of the N-terminal 7 residues.

Functionally, major toxin that belongs to the bicyclic heptapeptides called phallotoxins. Although structurally related to amatoxins, phallotoxins have a different mode of action, which is the stabilization of F-actin. Phallotoxins are poisonous when administered parenterally, but not orally because of poor absorption. In Amanita rimosa, this protein is Phallacidin proprotein.